The primary structure comprises 267 residues: D-aminoacyl-tRNA deacylase (267 aa).

Belongs to the DtdA deacylase family. Monomer. Zn(2+) is required as a cofactor.

It carries out the reaction a D-aminoacyl-tRNA + H2O = a tRNA + a D-alpha-amino acid + H(+). It catalyses the reaction glycyl-tRNA(Ala) + H2O = tRNA(Ala) + glycine + H(+). Functionally, D-aminoacyl-tRNA deacylase with broad substrate specificity. By recycling D-aminoacyl-tRNA to D-amino acids and free tRNA molecules, this enzyme counteracts the toxicity associated with the formation of D-aminoacyl-tRNA entities in vivo. This is D-aminoacyl-tRNA deacylase from Methanothrix thermoacetophila (strain DSM 6194 / JCM 14653 / NBRC 101360 / PT) (Methanosaeta thermophila).